The primary structure comprises 305 residues: Probable lipid kinase YegS-like (305 aa).

The DAGKc domain occupies methionine 1 to isoleucine 129. Residues threonine 39, glycine 65 to aspartate 71, and threonine 92 contribute to the ATP site. Mg(2+) is bound by residues leucine 210, aspartate 213, and leucine 215. Residue glutamate 268 is the Proton acceptor of the active site.

This sequence belongs to the diacylglycerol/lipid kinase family. YegS lipid kinase subfamily. Requires Mg(2+) as cofactor. It depends on Ca(2+) as a cofactor.

The protein localises to the cytoplasm. Functionally, probably phosphorylates lipids; the in vivo substrate is unknown. This chain is Probable lipid kinase YegS-like, found in Pseudomonas fluorescens (strain Pf0-1).